The following is a 975-amino-acid chain: Glycine dehydrogenase (decarboxylating) (975 aa).

N6-(pyridoxal phosphate)lysine is present on Lys-723.

Belongs to the GcvP family. As to quaternary structure, the glycine cleavage system is composed of four proteins: P, T, L and H. Pyridoxal 5'-phosphate serves as cofactor.

It catalyses the reaction N(6)-[(R)-lipoyl]-L-lysyl-[glycine-cleavage complex H protein] + glycine + H(+) = N(6)-[(R)-S(8)-aminomethyldihydrolipoyl]-L-lysyl-[glycine-cleavage complex H protein] + CO2. Functionally, the glycine cleavage system catalyzes the degradation of glycine. The P protein binds the alpha-amino group of glycine through its pyridoxal phosphate cofactor; CO(2) is released and the remaining methylamine moiety is then transferred to the lipoamide cofactor of the H protein. This chain is Glycine dehydrogenase (decarboxylating), found in Burkholderia vietnamiensis (strain G4 / LMG 22486) (Burkholderia cepacia (strain R1808)).